We begin with the raw amino-acid sequence, 595 residues long: Adenine deaminase 2 (595 aa).

Belongs to the metallo-dependent hydrolases superfamily. Adenine deaminase family. It depends on Mn(2+) as a cofactor.

It carries out the reaction adenine + H2O + H(+) = hypoxanthine + NH4(+). This chain is Adenine deaminase 2, found in Rhizobium etli (strain ATCC 51251 / DSM 11541 / JCM 21823 / NBRC 15573 / CFN 42).